Reading from the N-terminus, the 122-residue chain is Small ribosomal subunit protein uS13 (122 aa).

The tract at residues 94–122 (LSLPVRGQRTKTNSRTRKGKRKTVAGKKK) is disordered. The segment covering 101 to 122 (QRTKTNSRTRKGKRKTVAGKKK) has biased composition (basic residues).

Belongs to the universal ribosomal protein uS13 family. Part of the 30S ribosomal subunit. Forms a loose heterodimer with protein S19. Forms two bridges to the 50S subunit in the 70S ribosome.

Located at the top of the head of the 30S subunit, it contacts several helices of the 16S rRNA. In the 70S ribosome it contacts the 23S rRNA (bridge B1a) and protein L5 of the 50S subunit (bridge B1b), connecting the 2 subunits; these bridges are implicated in subunit movement. Contacts the tRNAs in the A and P-sites. This is Small ribosomal subunit protein uS13 from Chlamydia trachomatis serovar A (strain ATCC VR-571B / DSM 19440 / HAR-13).